The primary structure comprises 292 residues: Acetylglutamate kinase (292 aa).

Substrate-binding positions include 60 to 61, Arg82, and Asn187; that span reads GG.

The protein belongs to the acetylglutamate kinase family. ArgB subfamily.

The protein localises to the cytoplasm. It carries out the reaction N-acetyl-L-glutamate + ATP = N-acetyl-L-glutamyl 5-phosphate + ADP. It participates in amino-acid biosynthesis; L-arginine biosynthesis; N(2)-acetyl-L-ornithine from L-glutamate: step 2/4. Catalyzes the ATP-dependent phosphorylation of N-acetyl-L-glutamate. This is Acetylglutamate kinase from Methanobrevibacter smithii (strain ATCC 35061 / DSM 861 / OCM 144 / PS).